A 316-amino-acid polypeptide reads, in one-letter code: Glucan endo-1,3-beta-glucosidase GV (316 aa).

Residue glutamate 99 is the Proton donor of the active site. The active-site Nucleophile is the glutamate 239.

It belongs to the glycosyl hydrolase 17 family.

Its subcellular location is the cytoplasm. The enzyme catalyses Hydrolysis of (1-&gt;3)-beta-D-glucosidic linkages in (1-&gt;3)-beta-D-glucans.. May provide a degree of protection against microbial invasion of germinated barley grain through its ability to degrade fungal cell wall polysaccharides. This Hordeum vulgare (Barley) protein is Glucan endo-1,3-beta-glucosidase GV.